An 895-amino-acid chain; its full sequence is Probable methyltransferase PMT27 (895 aa).

Residues methionine 1 to serine 16 are Cytoplasmic-facing. Residues tyrosine 17 to leucine 37 form a helical; Signal-anchor for type II membrane protein membrane-spanning segment. Topologically, residues serine 38–glutamine 895 are lumenal. The segment covering isoleucine 43–threonine 52 has biased composition (polar residues). The segment at isoleucine 43–valine 362 is disordered. A compositionally biased stretch (basic and acidic residues) spans asparagine 90 to glutamate 114. Low complexity predominate over residues threonine 115 to glutamine 127. A compositionally biased stretch (basic and acidic residues) spans asparagine 129–lysine 143. The N-linked (GlcNAc...) asparagine glycan is linked to asparagine 145. Residues glycine 154–aspartate 174 show a composition bias toward basic and acidic residues. Positions glycine 176–lysine 191 are enriched in low complexity. Polar residues-rich tracts occupy residues glycine 199–serine 232 and proline 243–glutamine 256. Basic and acidic residues predominate over residues asparagine 257–glycine 320. Residues serine 337–threonine 346 show a composition bias toward polar residues. N-linked (GlcNAc...) asparagine glycans are attached at residues asparagine 375 and asparagine 709.

The protein belongs to the methyltransferase superfamily.

The protein resides in the endoplasmic reticulum membrane. The chain is Probable methyltransferase PMT27 from Arabidopsis thaliana (Mouse-ear cress).